Here is a 384-residue protein sequence, read N- to C-terminus: MTKPIITFNNVSKTFEDSGTQVLKNINFDLEEGKFYTLLGASGSGKSTILNIMAGLLDASSGDIYLDGERINDLPINKRDIHTVFQNYALFPHMTVFENVAFALKLKKVDKKEIAKRVKETLKMVQLEGYENRSIQKLSGGQRQRVAIARAIINQPRVVLLDEPLSALDLKLRTEMQYELRELQQRLGITFVFVTHDQEEALAMSDWVFVMNEGEIVQSGTPVDIYDEPINHFVANFIGESNIINGTMIEDYLVSFNGKEFESVDGGMRPNEPVEVVIRPEDLQITLPEEGKLQVKVDTQLFRGVHYEIIAYDELGNEWMIHSTRKAIEGEVIGLDFTPEDLHIMRLNETEEEFDARIEEYVEMDEPEDGLINAIEEERNEENL.

The ABC transporter domain maps to 6–238 (ITFNNVSKTF…PINHFVANFI (233 aa)). 40 to 47 (GASGSGKS) provides a ligand contact to ATP.

Belongs to the ABC transporter superfamily. Spermidine/putrescine importer (TC 3.A.1.11.1) family. As to quaternary structure, the complex is composed of two ATP-binding proteins (PotA), two transmembrane proteins (PotB and PotC) and a solute-binding protein (PotD).

The protein resides in the cell membrane. It catalyses the reaction ATP + H2O + polyamine-[polyamine-binding protein]Side 1 = ADP + phosphate + polyamineSide 2 + [polyamine-binding protein]Side 1.. In terms of biological role, part of the ABC transporter complex PotABCD involved in spermidine/putrescine import. Responsible for energy coupling to the transport system. The sequence is that of Spermidine/putrescine import ATP-binding protein PotA from Streptococcus pyogenes serotype M28 (strain MGAS6180).